The primary structure comprises 945 residues: Leucine--tRNA ligase (945 aa).

The 'HIGH' region motif lies at 43-53 (PYPNGAIHIGH). The 'KMSKS' region motif lies at 638–642 (KMSKS). Lysine 641 serves as a coordination point for ATP.

It belongs to the class-I aminoacyl-tRNA synthetase family.

The protein resides in the cytoplasm. It carries out the reaction tRNA(Leu) + L-leucine + ATP = L-leucyl-tRNA(Leu) + AMP + diphosphate. This chain is Leucine--tRNA ligase, found in Pyrobaculum neutrophilum (strain DSM 2338 / JCM 9278 / NBRC 100436 / V24Sta) (Thermoproteus neutrophilus).